A 478-amino-acid chain; its full sequence is Succinyl-CoA:acetate/propanoyl-CoA:succinate CoA transferase (478 aa).

Residues 1-30 (MYQLAFLRCRYASPIVREARRAFHASRKCQ) constitute a mitochondrion transit peptide. 256-260 (GIGAI) provides a ligand contact to CoA. The active-site 5-glutamyl coenzyme A thioester intermediate is the Glu279. CoA-binding residues include Ile354, Gly377, and Lys404.

The protein belongs to the acetyl-CoA hydrolase/transferase family.

The protein localises to the mitochondrion. The catalysed reaction is succinyl-CoA + acetate = succinate + acetyl-CoA. The enzyme catalyses propanoyl-CoA + succinate = propanoate + succinyl-CoA. Functionally, transferase involved in anaerobic fumarate-respiration in the mitochondria. Catalyzes the transfer of the CoA moiety of acetyl-CoA or propionyl-CoA to succinate, thereby forming acetate and propionate, respectively. Acetate and propionate are the two major metabolic end products in the anaerobic mitochondrial metabolism of F.hepatica. Also displays CoA transferase activities from acetyl-CoA to propionate, acetate and butyrate. The sequence is that of Succinyl-CoA:acetate/propanoyl-CoA:succinate CoA transferase from Fasciola hepatica (Liver fluke).